A 117-amino-acid polypeptide reads, in one-letter code: Pterin-4-alpha-carbinolamine dehydratase 2 (117 aa).

N6-acetyllysine; alternate is present on residues lysine 101, lysine 105, and lysine 112. Lysine 101, lysine 105, and lysine 112 each carry N6-succinyllysine; alternate.

This sequence belongs to the pterin-4-alpha-carbinolamine dehydratase family. Homotetramer. Interacts with DYRK1B.

The catalysed reaction is (4aS,6R)-4a-hydroxy-L-erythro-5,6,7,8-tetrahydrobiopterin = (6R)-L-erythro-6,7-dihydrobiopterin + H2O. In terms of biological role, involved in tetrahydrobiopterin biosynthesis. Seems to both prevent the formation of 7-pterins and accelerate the formation of quinonoid-BH2. Regulates the dimerization of homeodomain protein HNF-1-alpha and enhances its transcriptional activity. The polypeptide is Pterin-4-alpha-carbinolamine dehydratase 2 (PCBD2) (Pongo abelii (Sumatran orangutan)).